The chain runs to 442 residues: Putative amino acid transporter YuiF (442 aa).

Helical transmembrane passes span 21–41 (IVIALIIGALAGGLTGGLGLG), 51–71 (LGGNATVAVSYAMLGAFAAAL), 103–123 (LIVLIILIVSCFSQNVVPVHI), 146–166 (LIACVITFGLTAPYILLPVGF), 190–210 (IPYALIIPVAGMVVGLILSVI), 236–256 (IGIAVLAIVVSLGVQLYLSQT), 259–279 (VEGMIMGALAGLIVLFVSGVM), 292–312 (MVLMAFIGFVMLVAAGFSNVL), 335–355 (LGALLMLIVGLLITMGIGSSF), 364–384 (IFVPLCMQLGFSPMATIAIIG), and 421–441 (VPTFIFYNIPLVIFGWIAALV).

It is found in the cell membrane. This chain is Putative amino acid transporter YuiF (yuiF), found in Bacillus subtilis (strain 168).